A 286-amino-acid polypeptide reads, in one-letter code: ATP synthase gamma chain (286 aa).

This sequence belongs to the ATPase gamma chain family. In terms of assembly, F-type ATPases have 2 components, CF(1) - the catalytic core - and CF(0) - the membrane proton channel. CF(1) has five subunits: alpha(3), beta(3), gamma(1), delta(1), epsilon(1). CF(0) has three main subunits: a, b and c.

The protein resides in the cell inner membrane. Its function is as follows. Produces ATP from ADP in the presence of a proton gradient across the membrane. The gamma chain is believed to be important in regulating ATPase activity and the flow of protons through the CF(0) complex. The sequence is that of ATP synthase gamma chain from Pseudomonas putida (strain ATCC 700007 / DSM 6899 / JCM 31910 / BCRC 17059 / LMG 24140 / F1).